Here is a 156-residue protein sequence, read N- to C-terminus: AP-1 complex subunit sigma-1 (156 aa).

Belongs to the adaptor complexes small subunit family. As to quaternary structure, adaptor protein complex 1 (AP-1) is a heterotetramer composed of two large adaptins (gamma-type subunit and beta-type subunit), a medium adaptin (mu-type subunit) and a small adaptin (sigma-type subunit).

The protein localises to the golgi apparatus. Its subcellular location is the trans-Golgi network. It is found in the cytoplasmic vesicle. It localises to the clathrin-coated vesicle membrane. In terms of biological role, subunit of clathrin-associated adaptor protein complex 1 that plays a role in protein sorting in the trans-Golgi network (TGN) and endosomes. The AP complexes mediate the recruitment of clathrin to membranes and the recognition of sorting signals within the cytosolic tails of transmembrane cargo molecules. Also involved in early steps of phagocytosis and macropinocytosis. This Dictyostelium discoideum (Social amoeba) protein is AP-1 complex subunit sigma-1 (ap1s1).